The sequence spans 115 residues: Large ribosomal subunit protein bL20 (115 aa).

This sequence belongs to the bacterial ribosomal protein bL20 family.

In terms of biological role, binds directly to 23S ribosomal RNA and is necessary for the in vitro assembly process of the 50S ribosomal subunit. It is not involved in the protein synthesizing functions of that subunit. This Chlorobaculum parvum (strain DSM 263 / NCIMB 8327) (Chlorobium vibrioforme subsp. thiosulfatophilum) protein is Large ribosomal subunit protein bL20.